Here is a 310-residue protein sequence, read N- to C-terminus: Homoserine kinase (310 aa).

91 to 101 (PIGSGLGSSAC) provides a ligand contact to ATP.

Belongs to the GHMP kinase family. Homoserine kinase subfamily.

It localises to the cytoplasm. It carries out the reaction L-homoserine + ATP = O-phospho-L-homoserine + ADP + H(+). Its pathway is amino-acid biosynthesis; L-threonine biosynthesis; L-threonine from L-aspartate: step 4/5. In terms of biological role, catalyzes the ATP-dependent phosphorylation of L-homoserine to L-homoserine phosphate. This chain is Homoserine kinase, found in Escherichia coli (strain SE11).